Here is a 296-residue protein sequence, read N- to C-terminus: Elongation factor Ts (296 aa).

The interval 82–85 (TDFV) is involved in Mg(2+) ion dislocation from EF-Tu.

The protein belongs to the EF-Ts family.

It is found in the cytoplasm. Its function is as follows. Associates with the EF-Tu.GDP complex and induces the exchange of GDP to GTP. It remains bound to the aminoacyl-tRNA.EF-Tu.GTP complex up to the GTP hydrolysis stage on the ribosome. The chain is Elongation factor Ts from Coxiella burnetii (strain CbuG_Q212) (Coxiella burnetii (strain Q212)).